The sequence spans 127 residues: Putative histone H3.3-like type 3 (127 aa).

Residues lysine 6 and lysine 15 each carry the N6-acetyllysine modification. Residues lysine 19, lysine 28, and lysine 71 each carry the N6-methylated lysine modification.

This sequence belongs to the histone H3 family. The nucleosome is a histone octamer containing two molecules each of H2A, H2B, H3 and H4 assembled in one H3-H4 heterotetramer and two H2A-H2B heterodimers. The octamer wraps approximately 147 bp of DNA. Post-translationally, acetylation is generally linked to gene activation.

The protein resides in the nucleus. Its subcellular location is the chromosome. Functionally, putative variant histone H3 which may replace conventional H3 in a subset of nucleosomes. Nucleosomes wrap and compact DNA into chromatin, limiting DNA accessibility to the cellular machineries which require DNA as a template. Histones thereby play a central role in transcription regulation, DNA repair, DNA replication and chromosomal stability. DNA accessibility is regulated via a complex set of post-translational modifications of histones, also called histone code, and nucleosome remodeling. This Caenorhabditis elegans protein is Putative histone H3.3-like type 3 (his-69).